The following is a 365-amino-acid chain: Eukaryotic translation initiation factor 3 subunit H (365 aa).

Positions 11-160 constitute an MPN domain; it reads VKVDALVVMK…LRAFRLSSKF (150 aa).

The protein belongs to the eIF-3 subunit H family. As to quaternary structure, component of the eukaryotic translation initiation factor 3 (eIF-3) complex.

It is found in the cytoplasm. In terms of biological role, component of the eukaryotic translation initiation factor 3 (eIF-3) complex, which is involved in protein synthesis of a specialized repertoire of mRNAs and, together with other initiation factors, stimulates binding of mRNA and methionyl-tRNAi to the 40S ribosome. The eIF-3 complex specifically targets and initiates translation of a subset of mRNAs involved in cell proliferation. The polypeptide is Eukaryotic translation initiation factor 3 subunit H (Aspergillus oryzae (strain ATCC 42149 / RIB 40) (Yellow koji mold)).